Reading from the N-terminus, the 411-residue chain is DNA polymerase processivity factor (411 aa).

The disordered stretch occupies residues 296–411 (LKQPAEQEQP…SNSNSFVSII (116 aa)). Residues 304-318 (QPTTSQPSDPQSSNS) are compositionally biased toward low complexity. Over residues 345-358 (DSEEDSDSDSDQDC) the composition is skewed to acidic residues.

Belongs to the herpesviridae DNA polymerase accessory subunit family.

Functionally, increases the processivity of the viral polymerase, probably by acting as a sliding clamp that prevents dissociation of the polymerase from the active template. The chain is DNA polymerase processivity factor (59) from Alcelaphine herpesvirus 1 (strain C500) (AlHV-1).